The sequence spans 416 residues: NADH-quinone oxidoreductase subunit H (416 aa).

9 helical membrane-spanning segments follow: residues 16 to 36 (LILAKAVGVFVFLVLTVLAAI), 84 to 104 (PVYLLAPVISVIPAFLAFAVI), 124 to 144 (LAVAVLYILAVTSVGVYGIVL), 165 to 185 (VVSYEIAMALSFATVFLYAGT), 197 to 217 (STWYVFLLLPSFLVYVTSMVG), 260 to 280 (VSALATTMFLGGWHAPWPISL), 288 to 308 (WWPLLWFTAKVWVFLFVYIWL), 320 to 340 (FMAIGWKMLIPVSLAWIMIVA), and 353 to 373 (WASGLLIAGTVLTFGLAVVLW).

Belongs to the complex I subunit 1 family. As to quaternary structure, NDH-1 is composed of 14 different subunits. Subunits NuoA, H, J, K, L, M, N constitute the membrane sector of the complex.

The protein resides in the cell membrane. The catalysed reaction is a quinone + NADH + 5 H(+)(in) = a quinol + NAD(+) + 4 H(+)(out). Its function is as follows. NDH-1 shuttles electrons from NADH, via FMN and iron-sulfur (Fe-S) centers, to quinones in the respiratory chain. The immediate electron acceptor for the enzyme in this species is believed to be menaquinone. Couples the redox reaction to proton translocation (for every two electrons transferred, four hydrogen ions are translocated across the cytoplasmic membrane), and thus conserves the redox energy in a proton gradient. This subunit may bind ubiquinone. The chain is NADH-quinone oxidoreductase subunit H from Mycobacterium sp. (strain JLS).